A 554-amino-acid chain; its full sequence is Nonribosomal peptide synthetase ALT12 (554 aa).

The 76-residue stretch at M1–Q76 folds into the Carrier domain. S35 carries the post-translational modification O-(pantetheine 4'-phosphoryl)serine. Positions V124–T434 are condensation.

This sequence belongs to the NRP synthetase family.

Its pathway is mycotoxin biosynthesis. Its function is as follows. Nonribosomal peptide synthetase; part of the gene cluster that mediates the biosynthesis of the host-selective toxins (HSTs) AAL-toxins, sphinganine-analog mycotoxins responsible for Alternaria stem canker on tomato by the tomato pathotype. The biosynthesis starts with the polyketide synthase ALT1-catalyzed C-16 carbon chain assembly from one starter acetyl-CoA unit with malonyl-CoA extender units. ALT1 also selectively transfers methyl groups at the first and the third cycle of chain elongation for AAL toxin. The C-16 polyketide chain is released from the enzyme by a nucleophilic attack of a carbanion, which is derived from R-carbon of glycin by decarboxylation, on the carbonyl carbon of polyketide acyl chain. This step is probably catalyzed by a pyridoxal 5'-phosphate-dependent aminoacyl transferase ALT4. The respective functions of the other enzymes encoded by the cluster have still to be elucidated. The sphingosine N-acyltransferase-like protein ALT7 seems not to act as a resistance/self-tolerance factor against the toxin in the toxin biosynthetic gene cluster, contrary to what is expected. This is Nonribosomal peptide synthetase ALT12 from Alternaria alternata (Alternaria rot fungus).